We begin with the raw amino-acid sequence, 259 residues long: Ras-related protein Rab-34 (259 aa).

The residue at position 1 (M1) is an N-acetylmethionine. GTP-binding residues include S62, V63, G64, K65, T66, D78, Y81, and T84. T66 lines the Mg(2+) pocket. Positions 71 to 89 (RFCKDTFDKNYKATIGVDF) match the Switch 1 motif. Residues T84 and D107 each coordinate Mg(2+). The Switch 2 signature appears at 108–127 (TAGQERFKCIASTYYRGAQA). G110, K167, D169, and S198 together coordinate GTP. The residue at position 241 (S241) is a Phosphoserine. 2 S-geranylgeranyl cysteine lipidation sites follow: C257 and C258.

Belongs to the small GTPase superfamily. Rab family. As to quaternary structure, interacts with RILP. The GTP-bound form interacts with REP15. Mg(2+) serves as cofactor.

It localises to the cytoplasm. Its subcellular location is the golgi apparatus. The protein resides in the cytoplasmic vesicle. The protein localises to the phagosome. It is found in the phagosome membrane. It localises to the cell projection. Its subcellular location is the cilium. The protein resides in the cytoskeleton. The protein localises to the microtubule organizing center. It is found in the centrosome. It localises to the centriole. The enzyme catalyses GTP + H2O = GDP + phosphate + H(+). With respect to regulation, regulated by guanine nucleotide exchange factors (GEFs) which promote the exchange of bound GDP for free GTP. Regulated by GTPase activating proteins (GAPs) which increase the GTP hydrolysis activity. Inhibited by GDP dissociation inhibitors (GDIs). Its function is as follows. The small GTPases Rab are key regulators of intracellular membrane trafficking, from the formation of transport vesicles to their fusion with membranes. Rabs cycle between an inactive GDP-bound form and an active GTP-bound form that is able to recruit to membranes different sets of downstream effectors directly responsible for vesicle formation, movement, tethering and fusion. RAB34 transports protein involved in the redistribution of lysosomes to the peri-Golgi region. Plays a role in the maturation of phagosomes that engulf pathogens, such as S.aureus and M.tuberculosis. Plays a role in the fusion of phagosomes with lysosomes. Involved in ciliogenesis. In particular, it is required for early steps of the intracellular cilium assembly pathway initiated by trafficking and docking of ciliary vesicles to the centrioles in the cytoplasm, followed by axoneme formation in the cytoplasm. After axoneme elongation, the centrioles migrate close to the cell surface so that ciliary vesicles can fuse with the plasma membrane to expose cilia to the extracellular space. It seems dispensable for ciliogenesis via the extracellular pathway where cilium assembly begins after migration and docking of the centriole to the plasma membrane. Also acts as a positive regulator of hedgehog signaling and regulates ciliary function. The sequence is that of Ras-related protein Rab-34 from Rattus norvegicus (Rat).